Consider the following 2326-residue polypeptide: Probable voltage-dependent N-type calcium channel subunit alpha-1B (2326 aa).

Topologically, residues 1–83 (MARLGNDVPA…DNIIRKYAKR (83 aa)) are cytoplasmic. A disordered region spans residues 17 to 37 (AGGGRGANRHAGPQAGQRGMY). The stretch at 75 to 351 (NIIRKYAKRI…LVLGVLSGEF (277 aa)) is one I repeat. A helical transmembrane segment spans residues 84 to 107 (ITEWPPFEYMILATIIANCIVLAL). Residues 108–124 (EQHLPDGDKTPMSERLD) are Extracellular-facing. Residues 125–145 (DTEPYFIGIFCFEAGIKIIAL) form a helical membrane-spanning segment. The Cytoplasmic portion of the chain corresponds to 146 to 156 (GFAFHKGSYLR). A helical membrane pass occupies residues 157-175 (NGWNVMDFVVVLTGILTTI). Topologically, residues 176 to 180 (GTDFD) are extracellular. A helical transmembrane segment spans residues 181–204 (LRTLRAVRVLRPLKLVSGIPSLQV). The Cytoplasmic segment spans residues 205 to 214 (VLKSIMKAMV). A helical membrane pass occupies residues 215 to 237 (PLLQIGLLLFFAILMFAIIGLEF). The Extracellular segment spans residues 238-323 (YMGKFHKTCF…TANDALGNTW (86 aa)). N-linked (GlcNAc...) asparagine glycosylation occurs at asparagine 271. Residues 324–348 (NWLYFIPLIVIGSFFMLNLVLGVLS) form a helical membrane-spanning segment. Topologically, residues 349-472 (GEFAKERERV…FFIRRMVKSQ (124 aa)) are cytoplasmic. The segment at 371 to 388 (QQVEQEFNRYLRWIHIAE) is binding to the beta subunit. The stretch at 458–702 (EKRFRFFIRR…VFLAIAVDNL (245 aa)) is one II repeat. Residues 473–491 (SFYWIVLCLVGLNTLCVAI) traverse the membrane as a helical segment. The Extracellular segment spans residues 492–501 (VHYDQPPLLT). A helical transmembrane segment spans residues 502–524 (DALYFAEFVFLGLFLTEMSLKMY). The Cytoplasmic segment spans residues 525–534 (GLGPRNYFHS). Residue serine 534 participates in a 1,2-diacyl-sn-glycero-3-phospho-(1D-myo-inositol-4,5-bisphosphate) binding. Residues 535 to 556 (SFNCFDFGVIVGSIFEVVWTAV) traverse the membrane as a helical segment. The Extracellular segment spans residues 557–563 (KPDTSFG). The chain crosses the membrane as a helical span at residues 564–576 (ISVLRALRLLRIF). A 1,2-diacyl-sn-glycero-3-phospho-(1D-myo-inositol-4,5-bisphosphate) contacts are provided by arginine 574 and lysine 577. Over 577–594 (KVTKYWNSLRNLVVSLLN) the chain is Cytoplasmic. Residues 595–620 (SMKSIISLLFLLFLFIVVFALLGMQL) form a helical membrane-spanning segment. Over 621 to 672 (FGGQFNFEDGTPPTNFDTFPAAILTVFQILTGEDWNEVMYYGIEAHGGVKKG) the chain is Extracellular. The helical transmembrane segment at 673-699 (MFSSVYFIILTLFGNYTLLNVFLAIAV) threads the bilayer. Residues 700–1148 (DNLANAQELT…ACHYIVNLRY (449 aa)) are Cytoplasmic-facing. Residues 793–1048 (SHQIRPDMKT…LQHLPQQPED (256 aa)) form a disordered region. Basic and acidic residues-rich tracts occupy residues 796–808 (IRPD…DRPL), 854–879 (KLGE…DDKR), 886–908 (SKET…SHEG), 935–979 (HGTE…EGAE), and 994–1011 (SEEK…VLRE). A compositionally biased stretch (polar residues) spans 1020–1032 (TQPSQDSGTQGNV). An III repeat occupies 1134 to 1416 (NPVRRACHYI…IFVALIIITF (283 aa)). A helical transmembrane segment spans residues 1149–1167 (FEMCILLVITMSSIALAAE). Topologically, residues 1168–1175 (DPVQGDAP) are extracellular. The helical transmembrane segment at 1176–1200 (RNNVLKYLDYVFTGVFTFEMVIKMI) threads the bilayer. Over 1201-1214 (NLGLILHPGSYFRD) the chain is Cytoplasmic. The helical transmembrane segment at 1215–1235 (LWNILDFIVVSGALVAFAFTG) threads the bilayer. Over 1236-1241 (SRGKDL) the chain is Extracellular. The helical transmembrane segment at 1242 to 1262 (NTIKSLRVLRVLRPLKTIKRL) threads the bilayer. Over 1263–1280 (PKLKAVFDCVVNSLKNVL) the chain is Cytoplasmic. The chain crosses the membrane as a helical span at residues 1281-1300 (NILIVYMLFMFIFAVIAVQL). Residues 1301–1387 (FKGKFFYCTD…DQGPSPSYRM (87 aa)) lie on the Extracellular side of the membrane. A helical membrane pass occupies residues 1388 to 1413 (EMSIFYVVYFVVFPFFFVNIFVALII). The Cytoplasmic portion of the chain corresponds to 1414-1468 (ITFQEQGDKVMSDCSLEKNERACIDFAISAKPLTRYMPQNKQTFQYKMWKFVVSP). The stretch at 1453–1708 (NKQTFQYKMW…LFVAVIMDNF (256 aa)) is one IV repeat. Residues 1469–1487 (PFEYLIMALIALNTIVLMM) form a helical membrane-spanning segment. Over 1488–1495 (KFYNAPDP) the chain is Extracellular. The helical transmembrane segment at 1496-1520 (YDRMLQYLNILFTFLFSMECVLKLI) threads the bilayer. The Cytoplasmic segment spans residues 1521–1530 (GFGVLNYFRD). A helical membrane pass occupies residues 1531 to 1552 (AWNVFDFVTVLGSITDILVTEL). At 1553-1558 (ADSFIN) the chain is on the extracellular side. Asparagine 1558 carries an N-linked (GlcNAc...) asparagine glycan. The chain crosses the membrane as a helical span at residues 1559–1577 (LSFLRLFRAARLIKLLRQG). At 1578–1596 (YTIRILLWTFVQSFKALPY) the chain is on the cytoplasmic side. A helical membrane pass occupies residues 1597–1616 (VCLLIAMLFFIYAIIGMQVF). The Extracellular portion of the chain corresponds to 1617-1680 (GNIELDDDGA…IDGDECGSNF (64 aa)). A helical transmembrane segment spans residues 1681 to 1704 (AYFYFVSFIFFSSFLMLNLFVAVI). Residues 1705–2326 (MDNFEYLTRD…YRETDEDDWC (622 aa)) are Cytoplasmic-facing. The 36-residue stretch at 1721–1756 (HHLDEFIRVWAEYDPGARGRITYNDMYEMLRHMCPP) folds into the EF-hand domain. Aspartate 1734, arginine 1740, and aspartate 1745 together coordinate Ca(2+). A compositionally biased stretch (polar residues) spans 1897–1912 (EEPSSYSTSHKNSVNP). 4 disordered regions span residues 1897 to 1916 (EEPS…LYQG), 1932 to 1954 (CAEG…KSSS), 2039 to 2242 (PHHH…SSDP), and 2271 to 2326 (TTAT…DDWC). Residues 1932-1948 (CAEGKKEVPESHPEEAG) show a composition bias toward basic and acidic residues. The segment covering 2039–2055 (PHHHHHHHRCHHRREKK) has biased composition (basic residues). 2 stretches are compositionally biased toward basic and acidic residues: residues 2056–2069 (QRSL…HADE) and 2077–2104 (QLRD…EKQR). Polar residues-rich tracts occupy residues 2142-2161 (GSGS…STPS), 2275-2289 (GRSP…QPPQ), and 2302-2311 (GRSTGPSTAA).

This sequence belongs to the calcium channel alpha-1 subunit (TC 1.A.1.11) family. In terms of assembly, multisubunit complex consisting of alpha-1, alpha-2, beta and delta subunits in a 1:1:1:1 ratio. The channel activity is directed by the pore-forming and voltage-sensitive alpha-1 subunit. In many cases, this subunit is sufficient to generate voltage-sensitive calcium channel activity. The auxiliary subunits beta and alpha-2/delta linked by a disulfide bridge regulate the channel activity. Phosphorylated in vitro by CaM-kinase II, PKA, PKC and CGPK. Expression is higher in the electric lobe than in the forebrain.

Its subcellular location is the membrane. The isoform alpha-1B gives rise to N-type calcium currents. N-type calcium channels belong to the 'high-voltage activated' (HVA) group. In Diplobatis ommata (Ocellated electric ray), this protein is Probable voltage-dependent N-type calcium channel subunit alpha-1B.